The primary structure comprises 814 residues: Acyl-coenzyme A dehydrogenase (814 aa).

Glu497 (proton acceptor) is an active-site residue.

The protein belongs to the acyl-CoA dehydrogenase family. FAD is required as a cofactor.

The catalysed reaction is a medium-chain 2,3-saturated fatty acyl-CoA + oxidized [electron-transfer flavoprotein] + H(+) = a medium-chain (2E)-enoyl-CoA + reduced [electron-transfer flavoprotein]. It catalyses the reaction a long-chain 2,3-saturated fatty acyl-CoA + oxidized [electron-transfer flavoprotein] + H(+) = a long-chain (2E)-enoyl-CoA + reduced [electron-transfer flavoprotein]. It functions in the pathway lipid metabolism; fatty acid beta-oxidation. In terms of biological role, catalyzes the dehydrogenation of acyl-coenzymes A (acyl-CoAs) to 2-enoyl-CoAs, the first step of the beta-oxidation cycle of fatty acid degradation. Is required for the utilization of medium- and long-chain fatty acids as sole carbon sources for growth. Is needed for bacterial survival during carbone-source starvation. The sequence is that of Acyl-coenzyme A dehydrogenase (fadE) from Salmonella typhi.